Consider the following 170-residue polypeptide: Probable T4-type lysozyme 1 (170 aa).

The Proton donor role is filled by glutamate 13. The active-site Nucleophile is the aspartate 22.

Belongs to the glycosyl hydrolase 24 family.

The enzyme catalyses Hydrolysis of (1-&gt;4)-beta-linkages between N-acetylmuramic acid and N-acetyl-D-glucosamine residues in a peptidoglycan and between N-acetyl-D-glucosamine residues in chitodextrins.. This Dictyostelium discoideum (Social amoeba) protein is Probable T4-type lysozyme 1.